We begin with the raw amino-acid sequence, 510 residues long: Crotonobetaine/carnitine--CoA ligase (510 aa).

It belongs to the ATP-dependent AMP-binding enzyme family.

The catalysed reaction is 4-(trimethylamino)butanoate + ATP + CoA = 4-(trimethylamino)butanoyl-CoA + AMP + diphosphate. The enzyme catalyses crotonobetaine + ATP + CoA = crotonobetainyl-CoA + AMP + diphosphate. It carries out the reaction (R)-carnitine + ATP + CoA = (R)-carnitinyl-CoA + AMP + diphosphate. The protein operates within amine and polyamine metabolism; carnitine metabolism. Catalyzes the transfer of CoA to carnitine, generating the initial carnitinyl-CoA needed for the CaiB reaction cycle. Also has activity toward crotonobetaine and gamma-butyrobetaine. The chain is Crotonobetaine/carnitine--CoA ligase from Shigella flexneri serotype 5b (strain 8401).